A 293-amino-acid polypeptide reads, in one-letter code: Bifunctional protein FolD (293 aa).

NADP(+) contacts are provided by residues 169–171 (GRG), T196, and V237.

The protein belongs to the tetrahydrofolate dehydrogenase/cyclohydrolase family. In terms of assembly, homodimer.

The enzyme catalyses (6R)-5,10-methylene-5,6,7,8-tetrahydrofolate + NADP(+) = (6R)-5,10-methenyltetrahydrofolate + NADPH. It catalyses the reaction (6R)-5,10-methenyltetrahydrofolate + H2O = (6R)-10-formyltetrahydrofolate + H(+). It participates in one-carbon metabolism; tetrahydrofolate interconversion. Catalyzes the oxidation of 5,10-methylenetetrahydrofolate to 5,10-methenyltetrahydrofolate and then the hydrolysis of 5,10-methenyltetrahydrofolate to 10-formyltetrahydrofolate. The polypeptide is Bifunctional protein FolD (Leifsonia xyli subsp. xyli (strain CTCB07)).